The primary structure comprises 231 residues: Biosynthetic peptidoglycan transglycosylase (231 aa).

The chain crosses the membrane as a helical span at residues 12–34 (AAVLAGLALLLVALAVSYRWVPP).

The protein belongs to the glycosyltransferase 51 family.

The protein resides in the cell inner membrane. The catalysed reaction is [GlcNAc-(1-&gt;4)-Mur2Ac(oyl-L-Ala-gamma-D-Glu-L-Lys-D-Ala-D-Ala)](n)-di-trans,octa-cis-undecaprenyl diphosphate + beta-D-GlcNAc-(1-&gt;4)-Mur2Ac(oyl-L-Ala-gamma-D-Glu-L-Lys-D-Ala-D-Ala)-di-trans,octa-cis-undecaprenyl diphosphate = [GlcNAc-(1-&gt;4)-Mur2Ac(oyl-L-Ala-gamma-D-Glu-L-Lys-D-Ala-D-Ala)](n+1)-di-trans,octa-cis-undecaprenyl diphosphate + di-trans,octa-cis-undecaprenyl diphosphate + H(+). It functions in the pathway cell wall biogenesis; peptidoglycan biosynthesis. Functionally, peptidoglycan polymerase that catalyzes glycan chain elongation from lipid-linked precursors. In Rhodospirillum centenum (strain ATCC 51521 / SW), this protein is Biosynthetic peptidoglycan transglycosylase.